The primary structure comprises 340 residues: Holliday junction branch migration complex subunit RuvB (340 aa).

A large ATPase domain (RuvB-L) region spans residues 1–183 (MKRDDLVSPE…FGISFRLDYY (183 aa)). Residues L22, R23, G64, K67, T68, T69, 130–132 (EDF), R173, Y183, and R220 contribute to the ATP site. T68 serves as a coordination point for Mg(2+). The small ATPAse domain (RuvB-S) stretch occupies residues 184-254 (AVEELTKIIN…VAVHALEMLE (71 aa)). A head domain (RuvB-H) region spans residues 257–340 (DRGFDQMDRS…KFEVGQKELF (84 aa)). Positions 312 and 317 each coordinate DNA.

This sequence belongs to the RuvB family. As to quaternary structure, homohexamer. Forms an RuvA(8)-RuvB(12)-Holliday junction (HJ) complex. HJ DNA is sandwiched between 2 RuvA tetramers; dsDNA enters through RuvA and exits via RuvB. An RuvB hexamer assembles on each DNA strand where it exits the tetramer. Each RuvB hexamer is contacted by two RuvA subunits (via domain III) on 2 adjacent RuvB subunits; this complex drives branch migration. In the full resolvosome a probable DNA-RuvA(4)-RuvB(12)-RuvC(2) complex forms which resolves the HJ.

Its subcellular location is the cytoplasm. The enzyme catalyses ATP + H2O = ADP + phosphate + H(+). The RuvA-RuvB-RuvC complex processes Holliday junction (HJ) DNA during genetic recombination and DNA repair, while the RuvA-RuvB complex plays an important role in the rescue of blocked DNA replication forks via replication fork reversal (RFR). RuvA specifically binds to HJ cruciform DNA, conferring on it an open structure. The RuvB hexamer acts as an ATP-dependent pump, pulling dsDNA into and through the RuvAB complex. RuvB forms 2 homohexamers on either side of HJ DNA bound by 1 or 2 RuvA tetramers; 4 subunits per hexamer contact DNA at a time. Coordinated motions by a converter formed by DNA-disengaged RuvB subunits stimulates ATP hydrolysis and nucleotide exchange. Immobilization of the converter enables RuvB to convert the ATP-contained energy into a lever motion, pulling 2 nucleotides of DNA out of the RuvA tetramer per ATP hydrolyzed, thus driving DNA branch migration. The RuvB motors rotate together with the DNA substrate, which together with the progressing nucleotide cycle form the mechanistic basis for DNA recombination by continuous HJ branch migration. Branch migration allows RuvC to scan DNA until it finds its consensus sequence, where it cleaves and resolves cruciform DNA. This chain is Holliday junction branch migration complex subunit RuvB, found in Syntrophus aciditrophicus (strain SB).